We begin with the raw amino-acid sequence, 256 residues long: Undecaprenyl-diphosphatase (256 aa).

8 consecutive transmembrane segments (helical) span residues 1 to 21, 39 to 59, 70 to 90, 97 to 117, 134 to 154, 176 to 196, 205 to 225, and 235 to 255; these read MTIL…FLPI, NAIN…AVIF, IDLW…GFIF, LFSL…FLIV, AISL…LIPG, AEFS…YDLL, ANLI…YLSI, and FTFF…LLFF.

It belongs to the UppP family.

Its subcellular location is the cell inner membrane. It carries out the reaction di-trans,octa-cis-undecaprenyl diphosphate + H2O = di-trans,octa-cis-undecaprenyl phosphate + phosphate + H(+). Its function is as follows. Catalyzes the dephosphorylation of undecaprenyl diphosphate (UPP). Confers resistance to bacitracin. The chain is Undecaprenyl-diphosphatase from Sulfurimonas denitrificans (strain ATCC 33889 / DSM 1251) (Thiomicrospira denitrificans (strain ATCC 33889 / DSM 1251)).